The chain runs to 441 residues: ATP-dependent protease ATPase subunit HslU (441 aa).

Residues Val-18, 60–65 (GVGKTE), Asp-254, Glu-319, and Arg-391 contribute to the ATP site.

The protein belongs to the ClpX chaperone family. HslU subfamily. As to quaternary structure, a double ring-shaped homohexamer of HslV is capped on each side by a ring-shaped HslU homohexamer. The assembly of the HslU/HslV complex is dependent on binding of ATP.

The protein localises to the cytoplasm. Functionally, ATPase subunit of a proteasome-like degradation complex; this subunit has chaperone activity. The binding of ATP and its subsequent hydrolysis by HslU are essential for unfolding of protein substrates subsequently hydrolyzed by HslV. HslU recognizes the N-terminal part of its protein substrates and unfolds these before they are guided to HslV for hydrolysis. The chain is ATP-dependent protease ATPase subunit HslU from Verminephrobacter eiseniae (strain EF01-2).